The following is a 709-amino-acid chain: Polyribonucleotide nucleotidyltransferase (709 aa).

2 residues coordinate Mg(2+): Asp-490 and Asp-496. In terms of domain architecture, KH spans 557 to 616 (PKVITMRVLPEKIPVIIGPSGKNIKKIIDETGVKIDLDQEGLVRIYAVDGESADKAKEMI). Residues 626 to 694 (GEVYMGKVTR…EMGRAKVSLK (69 aa)) form the S1 motif domain.

It belongs to the polyribonucleotide nucleotidyltransferase family. Mg(2+) serves as cofactor.

The protein localises to the cytoplasm. It catalyses the reaction RNA(n+1) + phosphate = RNA(n) + a ribonucleoside 5'-diphosphate. In terms of biological role, involved in mRNA degradation. Catalyzes the phosphorolysis of single-stranded polyribonucleotides processively in the 3'- to 5'-direction. The sequence is that of Polyribonucleotide nucleotidyltransferase from Persephonella marina (strain DSM 14350 / EX-H1).